Consider the following 165-residue polypeptide: Crossover junction endodeoxyribonuclease RuvC (165 aa).

Catalysis depends on residues Asp7, Glu67, and Asp140. Mg(2+) contacts are provided by Asp7, Glu67, and Asp140.

This sequence belongs to the RuvC family. As to quaternary structure, homodimer which binds Holliday junction (HJ) DNA. The HJ becomes 2-fold symmetrical on binding to RuvC with unstacked arms; it has a different conformation from HJ DNA in complex with RuvA. In the full resolvosome a probable DNA-RuvA(4)-RuvB(12)-RuvC(2) complex forms which resolves the HJ. The cofactor is Mg(2+).

The protein localises to the cytoplasm. The catalysed reaction is Endonucleolytic cleavage at a junction such as a reciprocal single-stranded crossover between two homologous DNA duplexes (Holliday junction).. In terms of biological role, the RuvA-RuvB-RuvC complex processes Holliday junction (HJ) DNA during genetic recombination and DNA repair. Endonuclease that resolves HJ intermediates. Cleaves cruciform DNA by making single-stranded nicks across the HJ at symmetrical positions within the homologous arms, yielding a 5'-phosphate and a 3'-hydroxyl group; requires a central core of homology in the junction. The consensus cleavage sequence is 5'-(A/T)TT(C/G)-3'. Cleavage occurs on the 3'-side of the TT dinucleotide at the point of strand exchange. HJ branch migration catalyzed by RuvA-RuvB allows RuvC to scan DNA until it finds its consensus sequence, where it cleaves and resolves the cruciform DNA. The sequence is that of Crossover junction endodeoxyribonuclease RuvC from Desulfitobacterium hafniense (strain DSM 10664 / DCB-2).